The primary structure comprises 656 residues: Solute carrier family 5 member 4A (656 aa).

Topologically, residues 1–28 are cytoplasmic; the sequence is MASTASVSTSTASSELSSLSNNINNAAD. Residues 29–47 traverse the membrane as a helical segment; sequence ISVIVIYFVVVMAVGVWAM. The Extracellular segment spans residues 48-64; that stretch reads LKTNRSTVGGFFLAGRS. A helical membrane pass occupies residues 65-85; it reads MTWWPMGASLFASNIGSGHFV. Over 86–105 the chain is Cytoplasmic; the sequence is GLAGTGAASGIAVTAFESHS. A helical membrane pass occupies residues 106–126; it reads FALLLVLGWIFVPIYIKAGVM. Residues 127-171 lie on the Extracellular side of the membrane; sequence TMPEYLKKRFGGKRLQIYLSILFLFICVILTISADIFSGAIFIKL. The helical transmembrane segment at 172-191 threads the bilayer; it reads ALGLNLYLAILILLAITAIF. Residues 192–208 lie on the Cytoplasmic side of the membrane; it reads TITGGLASVIYTDTVQA. Residues 209–229 form a helical membrane-spanning segment; it reads VIMLVGSFILMVFAFVEVGGY. Topologically, residues 230 to 270 are extracellular; it reads ESFTEKFMNAIPSVVEGDNLTINSRCYTPQPDSFHIFRDPV. N-linked (GlcNAc...) asparagine glycosylation occurs at Asn248. A helical transmembrane segment spans residues 271–291; sequence TGDIPWPGTAFGMPITALWYW. Residues 292-314 are Cytoplasmic-facing; that stretch reads CINQVIVQRCLCGKNLSHVKAAC. The chain crosses the membrane as a helical span at residues 315–334; the sequence is ILCGYLKLLPLFFMVMPGMI. Residues 335–423 are Extracellular-facing; it reads SRILYTDMVA…RKKASERELL (89 aa). Residues 424–443 traverse the membrane as a helical segment; that stretch reads IAGRLFVSVLIVTSILWVPI. At 444-455 the chain is on the cytoplasmic side; sequence VEVSQGGQLVHY. A helical membrane pass occupies residues 456 to 476; the sequence is TEAISSYLGPPIAAVFLVAVF. The Extracellular portion of the chain corresponds to 477–526; that stretch reads CKRANEQGAFWGLMVGLVMGLIRMIAEFSYGTGSCLAPSSCPKIICGVHY. Residues 527–547 traverse the membrane as a helical segment; that stretch reads LYFAIILFFVCILVILGVSYL. At 548–634 the chain is on the cytoplasmic side; sequence TKPIPDVHLH…TDTTEKPFWR (87 aa). The tract at residues 574–593 is disordered; it reads DAEDKEENGADDRTEEDQTE. The helical transmembrane segment at 635–655 threads the bilayer; that stretch reads TVMNVNVILLLAVAAFFYGYF.

Belongs to the sodium:solute symporter (SSF) (TC 2.A.21) family. Expressed in small intestine. Expressed in kidney.

It is found in the cell membrane. Its activity is regulated as follows. Not inhibited by phlorizin. Functionally, does not function as sodium/D-glucose symporter. Generates D-glucose-induced depolarization in a pH-dependent manner, with activity in acidic conditions (pH 5) but not neutral conditions. The protein is Solute carrier family 5 member 4A of Mus musculus (Mouse).